The primary structure comprises 193 residues: Biphenyl dioxygenase subunit beta (193 aa).

Belongs to the bacterial ring-hydroxylating dioxygenase beta subunit family. In terms of assembly, heterohexamer consisting of 3 BphA1 subunits and 3 BphA2 subunits. A ferredoxin (BphA3) and a ferredoxin reductase (BphA4) must be present to obtain activity.

The catalysed reaction is biphenyl + NADH + O2 + H(+) = (2R,3S)-3-phenylcyclohexa-3,5-diene-1,2-diol + NAD(+). It participates in xenobiotic degradation; biphenyl degradation; 2-hydroxy-2,4-pentadienoate and benzoate from biphenyl: step 1/4. Its function is as follows. The beta subunit may be responsible for the substrate specificity of the enzyme. This Pseudomonas sp. (strain KKS102) protein is Biphenyl dioxygenase subunit beta (bphA2).